We begin with the raw amino-acid sequence, 147 residues long: MRTYTPKPGDINRQWHVIDATDVVLGRLASQTAILLRGKHKATFASHMDMGDFVIIINAEKVALTGAKLEQKRAYRHSGYPGGLTSVNYAELLESNPVRAVEKAIKGMLPKNSLAAQQLGKLKVYRGAEHPHAAQQPKTFEITQVAQ.

The protein belongs to the universal ribosomal protein uL13 family. Part of the 50S ribosomal subunit.

This protein is one of the early assembly proteins of the 50S ribosomal subunit, although it is not seen to bind rRNA by itself. It is important during the early stages of 50S assembly. The chain is Large ribosomal subunit protein uL13 from Pseudarthrobacter chlorophenolicus (strain ATCC 700700 / DSM 12829 / CIP 107037 / JCM 12360 / KCTC 9906 / NCIMB 13794 / A6) (Arthrobacter chlorophenolicus).